The following is a 252-amino-acid chain: Glycerol-3-phosphate acyltransferase (252 aa).

Transmembrane regions (helical) follow at residues 6-26, 66-86, 104-124, 140-160, 164-184, and 204-224; these read SVAM…YLIG, ILTL…TYII, AILV…PIFF, ITID…ILLI, MSLS…IPGI, and VIKG…ILIY.

This sequence belongs to the PlsY family. In terms of assembly, probably interacts with PlsX.

It is found in the cell membrane. It carries out the reaction an acyl phosphate + sn-glycerol 3-phosphate = a 1-acyl-sn-glycero-3-phosphate + phosphate. Its pathway is lipid metabolism; phospholipid metabolism. Its function is as follows. Catalyzes the transfer of an acyl group from acyl-phosphate (acyl-PO(4)) to glycerol-3-phosphate (G3P) to form lysophosphatidic acid (LPA). This enzyme utilizes acyl-phosphate as fatty acyl donor, but not acyl-CoA or acyl-ACP. In Ureaplasma urealyticum serovar 10 (strain ATCC 33699 / Western), this protein is Glycerol-3-phosphate acyltransferase.